The chain runs to 259 residues: Polycomb group RING finger protein 1 (259 aa).

An RING-type zinc finger spans residues 45-84 (CYLCAGYFIDATTITECLHTFCKSCIVKYLQTSKYCPLCN).

Component of a PRC1-like complex.

Its subcellular location is the nucleus. Component of a Polycomb group (PcG) multiprotein PRC1-like complex, a complex class required to maintain the transcriptionally repressive state of many genes, including Hox genes, throughout development. PcG PRC1 complex acts via chromatin remodeling and modification of histones; it mediates monoubiquitination of histone H2A 'Lys-119', rendering chromatin heritably changed in its expressibility. The sequence is that of Polycomb group RING finger protein 1 (pcgf1) from Xenopus tropicalis (Western clawed frog).